Consider the following 264-residue polypeptide: uncharacterized protein (264 aa).

The signal sequence occupies residues 1 to 26 (MMKKLFHSTLIVLLFFSFFGVQPIHA).

This is an uncharacterized protein from Bacillus subtilis (strain 168).